We begin with the raw amino-acid sequence, 429 residues long: Adenylosuccinate synthetase (429 aa).

GTP-binding positions include 12–18 (GDEGKGK) and 40–42 (GHT). The active-site Proton acceptor is Asp13. The Mg(2+) site is built by Asp13 and Gly40. Residues 13–16 (DEGK), 38–41 (NAGH), Thr128, Arg142, Gln223, Thr238, and Arg302 each bind IMP. His41 acts as the Proton donor in catalysis. A substrate-binding site is contributed by 298–304 (TVTGRPR). GTP is bound by residues Arg304, 330–332 (LLD), and 412–414 (SVG).

Belongs to the adenylosuccinate synthetase family. In terms of assembly, homodimer. The cofactor is Mg(2+).

It is found in the cytoplasm. The enzyme catalyses IMP + L-aspartate + GTP = N(6)-(1,2-dicarboxyethyl)-AMP + GDP + phosphate + 2 H(+). It functions in the pathway purine metabolism; AMP biosynthesis via de novo pathway; AMP from IMP: step 1/2. Its function is as follows. Plays an important role in the de novo pathway of purine nucleotide biosynthesis. Catalyzes the first committed step in the biosynthesis of AMP from IMP. The chain is Adenylosuccinate synthetase from Limosilactobacillus fermentum (strain NBRC 3956 / LMG 18251) (Lactobacillus fermentum).